A 144-amino-acid polypeptide reads, in one-letter code: Ribosomal RNA large subunit methyltransferase H (144 aa).

Residues L63, G92, and 111–116 (LSAMTL) each bind S-adenosyl-L-methionine.

This sequence belongs to the RNA methyltransferase RlmH family. As to quaternary structure, homodimer.

It is found in the cytoplasm. It carries out the reaction pseudouridine(1915) in 23S rRNA + S-adenosyl-L-methionine = N(3)-methylpseudouridine(1915) in 23S rRNA + S-adenosyl-L-homocysteine + H(+). Functionally, specifically methylates the pseudouridine at position 1915 (m3Psi1915) in 23S rRNA. The sequence is that of Ribosomal RNA large subunit methyltransferase H from Prochlorococcus marinus (strain MIT 9313).